We begin with the raw amino-acid sequence, 199 residues long: NAD(P)H quinone oxidoreductase PST3 (199 aa).

The Flavodoxin-like domain occupies 5-193; that stretch reads VAIIIYSLYH…EIAFIQGKSF (189 aa). Residues 11–15 and 111–165 each bind FMN; these read SLYHH and IFVS…SPYG.

Belongs to the WrbA family. The cofactor is FMN.

The protein resides in the cell membrane. The enzyme catalyses a quinone + NADH + H(+) = a quinol + NAD(+). It carries out the reaction a quinone + NADPH + H(+) = a quinol + NADP(+). In terms of biological role, flavodoxin-like protein (FLP) that plays a role in cell wall integrity, oxidative stress protection and virulence. FLPs act as NAD(P)H quinone oxidoreductases. Reduces ubiquinone (coenzyme Q), enabling it to serve as an antioxidant in the membrane. This Candida albicans (strain SC5314 / ATCC MYA-2876) (Yeast) protein is NAD(P)H quinone oxidoreductase PST3.